We begin with the raw amino-acid sequence, 298 residues long: Anamorsin homolog (298 aa).

Residues 1 to 143 (MTQLIITHQS…IKAEKPSWKP (143 aa)) are N-terminal SAM-like domain. The tract at residues 143–162 (PEEGKVLVDDIDLEGSVPDI) is linker. Residues Cys175, Cys182, Cys185, and Cys187 each contribute to the [2Fe-2S] cluster site. The interval 175–187 (CKSKERACNNCNC) is fe-S binding site A. Residues Cys218, Cys221, Cys229, and Cys232 each coordinate [4Fe-4S] cluster. 2 short sequence motifs (cx2C motif) span residues 218 to 221 (CGNC) and 229 to 232 (CSGC). The segment at 218-232 (CGNCYLGDAFRCSGC) is fe-S binding site B.

This sequence belongs to the anamorsin family. Monomer. Requires [2Fe-2S] cluster as cofactor. [4Fe-4S] cluster is required as a cofactor.

It localises to the cytoplasm. The protein resides in the mitochondrion intermembrane space. In terms of biological role, component of the cytosolic iron-sulfur (Fe-S) protein assembly (CIA) machinery. Required for the maturation of extramitochondrial Fe-S proteins. Part of an electron transfer chain functioning in an early step of cytosolic Fe-S biogenesis, facilitating the de novo assembly of a [4Fe-4S] cluster on the cytosolic Fe-S scaffold complex. Electrons are transferred from NADPH via a FAD- and FMN-containing diflavin oxidoreductase. Together with the diflavin oxidoreductase, also required for the assembly of the diferric tyrosyl radical cofactor of ribonucleotide reductase (RNR), probably by providing electrons for reduction during radical cofactor maturation in the catalytic small subunit. This is Anamorsin homolog from Cryptosporidium parvum (strain Iowa II).